Reading from the N-terminus, the 124-residue chain is Glycine cleavage system H protein (124 aa).

The region spanning 22 to 104 (TATVGITDFA…YGDGWMIEIE (83 aa)) is the Lipoyl-binding domain. K63 is subject to N6-lipoyllysine.

This sequence belongs to the GcvH family. In terms of assembly, the glycine cleavage system is composed of four proteins: P, T, L and H. The cofactor is (R)-lipoate.

Its function is as follows. The glycine cleavage system catalyzes the degradation of glycine. The H protein shuttles the methylamine group of glycine from the P protein to the T protein. The chain is Glycine cleavage system H protein from Salinibacter ruber (strain DSM 13855 / M31).